We begin with the raw amino-acid sequence, 218 residues long: 3-dehydroquinate dehydratase (218 aa).

Residues 29 to 31 (EFR) and R56 contribute to the 3-dehydroquinate site. Residue H116 is the Proton donor/acceptor of the active site. K142 functions as the Schiff-base intermediate with substrate in the catalytic mechanism. 3-dehydroquinate-binding residues include R180, S200, and Q204.

Belongs to the type-I 3-dehydroquinase family. Homodimer.

The enzyme catalyses 3-dehydroquinate = 3-dehydroshikimate + H2O. It functions in the pathway metabolic intermediate biosynthesis; chorismate biosynthesis; chorismate from D-erythrose 4-phosphate and phosphoenolpyruvate: step 3/7. Involved in the third step of the chorismate pathway, which leads to the biosynthesis of aromatic amino acids. Catalyzes the cis-dehydration of 3-dehydroquinate (DHQ) and introduces the first double bond of the aromatic ring to yield 3-dehydroshikimate. The sequence is that of 3-dehydroquinate dehydratase from Methanococcus maripaludis (strain C5 / ATCC BAA-1333).